A 730-amino-acid chain; its full sequence is Trimethylamine dehydrogenase (730 aa).

Positions 29, 31, 61, and 104 each coordinate FMN. Cys-31 carries the S-6-FMN cysteine modification. 170–173 (YGAH) contacts substrate. Tyr-175 functions as the Proton donor in the catalytic mechanism. FMN is bound by residues Arg-223, Asp-268, Arg-300, Ala-322, and Arg-323. [4Fe-4S] cluster is bound by residues Cys-346, Cys-349, Cys-352, and Cys-365. Residues Ser-401, Asp-420, Thr-421, His-428, Met-471, and Asp-675 each contribute to the ADP site.

This sequence in the N-terminal section; belongs to the NADH:flavin oxidoreductase/NADH oxidase family. Homodimer. Forms a ternary complex with the heterodimeric electron transfer flavoprotein. Requires FMN as cofactor. [4Fe-4S] cluster serves as cofactor.

It catalyses the reaction trimethylamine + oxidized [electron-transfer flavoprotein] + H2O + H(+) = dimethylamine + reduced [electron-transfer flavoprotein] + formaldehyde. In Methylophilus methylotrophus (Bacterium W3A1), this protein is Trimethylamine dehydrogenase.